A 197-amino-acid polypeptide reads, in one-letter code: Small ribosomal subunit protein uS4B (197 aa).

Positions 88 to 151 (CRLDNIAYRI…RKNDEFADNF (64 aa)) constitute an S4 RNA-binding domain.

The protein belongs to the universal ribosomal protein uS4 family. As to quaternary structure, part of the 30S ribosomal subunit. Contacts protein S5. The interaction surface between S4 and S5 is involved in control of translational fidelity.

One of the primary rRNA binding proteins, it binds directly to 16S rRNA where it nucleates assembly of the body of the 30S subunit. Functionally, with S5 and S12 plays an important role in translational accuracy. The protein is Small ribosomal subunit protein uS4B of Clostridium botulinum (strain Langeland / NCTC 10281 / Type F).